The chain runs to 85 residues: Large ribosomal subunit protein bL27 (85 aa).

The interval Met1–Gly22 is disordered.

This sequence belongs to the bacterial ribosomal protein bL27 family.

This chain is Large ribosomal subunit protein bL27, found in Pseudoalteromonas translucida (strain TAC 125).